An 809-amino-acid chain; its full sequence is Phenylalanine--tRNA ligase beta subunit (809 aa).

The 114-residue stretch at 39–152 (KDKWPNVYVG…ADALVGMLAS (114 aa)) folds into the tRNA-binding domain. The 89-residue stretch at 404–492 (KERNGIVLSL…RIAGYHTIPC (89 aa)) folds into the B5 domain. Mg(2+) contacts are provided by aspartate 470, aspartate 476, glutamate 479, and glutamate 480. Residues 717–808 (NRFPAVERDL…LNTETGAVLR (92 aa)) form the FDX-ACB domain.

It belongs to the phenylalanyl-tRNA synthetase beta subunit family. Type 1 subfamily. Tetramer of two alpha and two beta subunits. Requires Mg(2+) as cofactor.

The protein resides in the cytoplasm. The catalysed reaction is tRNA(Phe) + L-phenylalanine + ATP = L-phenylalanyl-tRNA(Phe) + AMP + diphosphate + H(+). This is Phenylalanine--tRNA ligase beta subunit from Dehalococcoides mccartyi (strain CBDB1).